We begin with the raw amino-acid sequence, 135 residues long: Large ribosomal subunit protein uL16m (135 aa).

It belongs to the universal ribosomal protein uL16 family.

Its subcellular location is the mitochondrion. The sequence is that of Large ribosomal subunit protein uL16m (RPL16) from Prototheca wickerhamii.